The primary structure comprises 61 residues: Acetylcholinesterase toxin C (61 aa).

Disulfide bonds link C3-C22, C17-C39, C41-C52, and C53-C59.

Belongs to the three-finger toxin family. Short-chain subfamily. Acn-esterase inhibitor sub-subfamily. As to expression, expressed by the venom gland.

Its subcellular location is the secreted. Functionally, inhibits acetylcholinesterase. In Dendroaspis polylepis polylepis (Black mamba), this protein is Acetylcholinesterase toxin C.